The following is a 165-amino-acid chain: REP-associated tyrosine transposase (165 aa).

The protein belongs to the transposase 17 family. RAYT subfamily. As to quaternary structure, monomer.

Its activity is regulated as follows. Cleavage occurs in the presence of magnesium, but is much more pronounced with manganese. In terms of biological role, transposase that is always flanked by repeated extragenic palindrome (REP) sequences, which are clustered in structures called bacterial interspersed mosaic elements (BIMEs). RayT catalyzes cleavage and recombination of BIMEs. Binds REP sequences and cleaves BIMEs both upstream and downstream of the REP sequence. Could be important in the creation of BIME variability and amplification. This chain is REP-associated tyrosine transposase, found in Escherichia coli (strain K12).